Here is a 319-residue protein sequence, read N- to C-terminus: Probable cell division protein WhiA (319 aa).

A DNA-binding region (H-T-H motif) is located at residues 278–311; that stretch reads SLKELGQMLNPPVGKSGVNHRLRRLESLAEAFSR.

It belongs to the WhiA family.

In terms of biological role, involved in cell division and chromosome segregation. The polypeptide is Probable cell division protein WhiA (Heliobacterium modesticaldum (strain ATCC 51547 / Ice1)).